The following is a 175-amino-acid chain: Adenine phosphoribosyltransferase (175 aa).

Belongs to the purine/pyrimidine phosphoribosyltransferase family. As to quaternary structure, homodimer.

Its subcellular location is the cytoplasm. The catalysed reaction is AMP + diphosphate = 5-phospho-alpha-D-ribose 1-diphosphate + adenine. Its pathway is purine metabolism; AMP biosynthesis via salvage pathway; AMP from adenine: step 1/1. In terms of biological role, catalyzes a salvage reaction resulting in the formation of AMP, that is energically less costly than de novo synthesis. The protein is Adenine phosphoribosyltransferase of Caldicellulosiruptor saccharolyticus (strain ATCC 43494 / DSM 8903 / Tp8T 6331).